Consider the following 84-residue polypeptide: Hepcidin (84 aa).

The first 24 residues, 1 to 24 (MALSSQIWAACLLLLLLLASLTSG), serve as a signal peptide directing secretion. A propeptide spanning residues 25-54 (SVFPQQTGQLAELQPQDRAGARAGWTPMLQ) is cleaved from the precursor. Intrachain disulfides connect Cys-69-Cys-72, Cys-70-Cys-78, and Cys-73-Cys-81.

It belongs to the hepcidin family. Interacts with SLC40A1; this interaction promotes SLC40A1 rapid ubiquitination.

Its subcellular location is the secreted. Functionally, liver-produced hormone that constitutes the main circulating regulator of iron absorption and distribution across tissues. Acts by promoting endocytosis and degradation of ferroportin/SLC40A1, leading to the retention of iron in iron-exporting cells and decreased flow of iron into plasma. Controls the major flows of iron into plasma: absorption of dietary iron in the intestine, recycling of iron by macrophages, which phagocytose old erythrocytes and other cells, and mobilization of stored iron from hepatocytes. Has strong antimicrobial activity against E.coli ML35P N.cinerea and weaker against S.epidermidis, S.aureus and group b streptococcus bacteria. Active against the fungus C.albicans. No activity against P.aeruginosa. This is Hepcidin (HAMP) from Pongo abelii (Sumatran orangutan).